The sequence spans 321 residues: ATP-dependent 6-phosphofructokinase (321 aa).

Gly-12 contributes to the ATP binding site. ADP-binding positions include 22 to 26 and 55 to 60; these read RGVVR and RYSVSD. ATP-binding positions include 73-74 and 103-106; these read RF and GDGS. Asp-104 is a Mg(2+) binding site. 127–129 lines the substrate pocket; sequence TID. The active-site Proton acceptor is Asp-129. An ADP-binding site is contributed by Arg-156. Residues Arg-164 and 171–173 contribute to the substrate site; that span reads MGR. ADP-binding positions include 187 to 189, Lys-213, and 215 to 217; these read GCE and KRH. Residues Glu-224, Arg-245, and 251–254 each bind substrate; that span reads HIQR.

Belongs to the phosphofructokinase type A (PFKA) family. ATP-dependent PFK group I subfamily. Prokaryotic clade 'B1' sub-subfamily. As to quaternary structure, homotetramer. Requires Mg(2+) as cofactor.

The protein resides in the cytoplasm. The enzyme catalyses beta-D-fructose 6-phosphate + ATP = beta-D-fructose 1,6-bisphosphate + ADP + H(+). Its pathway is carbohydrate degradation; glycolysis; D-glyceraldehyde 3-phosphate and glycerone phosphate from D-glucose: step 3/4. Allosterically activated by ADP and other diphosphonucleosides, and allosterically inhibited by phosphoenolpyruvate. Catalyzes the phosphorylation of D-fructose 6-phosphate to fructose 1,6-bisphosphate by ATP, the first committing step of glycolysis. This Histophilus somni (strain 129Pt) (Haemophilus somnus) protein is ATP-dependent 6-phosphofructokinase.